Here is a 653-residue protein sequence, read N- to C-terminus: 2-oxoglutarate oxidoreductase subunit KorA (653 aa).

The disordered stretch occupies residues 1–21 (MDPNGSGAGPESHDAAFHAAP). Basic and acidic residues predominate over residues 11–21 (ESHDAAFHAAP).

As to quaternary structure, KG oxidoreductase (KOR) is composed of KorA and KorB subunits.

The enzyme catalyses 2 oxidized [2Fe-2S]-[ferredoxin] + 2-oxoglutarate + CoA = succinyl-CoA + 2 reduced [2Fe-2S]-[ferredoxin] + CO2 + H(+). It functions in the pathway carbohydrate metabolism; tricarboxylic acid cycle. Component of KG oxidoreductase (KOR) that catalyzes the CoA-dependent oxidative decarboxylation of 2-oxoglutarate (alpha-ketoglutarate, KG) to succinyl-CoA. Methyl viologen can act as electron acceptor in vitro; the physiologic electron acceptor is unknown. Is involved in the alternative TCA pathway that functions concurrently with fatty acid beta-oxidation. Since a growing body of evidence indicates that lipids (for example cholesterol and fatty acids) are a predominant growth substrate for M.tuberculosis during infection, flux through KOR likely represents an important step in intermediary metabolism in vivo. KOR-dependent decarboxylation of KG also appears to be an important source of CO(2) in M.tuberculosis metabolism. The sequence is that of 2-oxoglutarate oxidoreductase subunit KorA (korA) from Mycobacterium tuberculosis (strain ATCC 25618 / H37Rv).